Here is a 291-residue protein sequence, read N- to C-terminus: Phytanoyl-CoA dioxygenase domain-containing protein 1 (291 aa).

T55 carries the post-translational modification Phosphothreonine. 2-oxoglutarate is bound by residues K102, M141, 156 to 158, and W174; that span reads HQD. H156 and D158 together coordinate Fe cation. H246 contacts Fe cation. Residues S248 and R257 each coordinate 2-oxoglutarate.

This sequence belongs to the PhyH family. PHYHD1 subfamily. Fe cation serves as cofactor.

Activity is increased by ascorbate. Inhibited by myristoyl-CoA. In terms of biological role, 2-oxoglutarate(2OG)-dependent dioxygenase that catalyzes the conversion of 2-oxoglutarate to succinate and CO(2) in an iron-dependent manner. However, does not couple 2OG turnover to the hydroxylation of acyl-coenzyme A derivatives, implying that it is not directly involved in phytanoyl coenzyme-A metabolism. Does not show detectable activity towards fatty acid CoA thioesters. Isoform 2 probably lacks enzyme activity. Functionally, isoform 3 probably lacks enzyme activity. The sequence is that of Phytanoyl-CoA dioxygenase domain-containing protein 1 from Homo sapiens (Human).